A 176-amino-acid chain; its full sequence is ATP-dependent protease subunit HslV (176 aa).

Thr-5 is an active-site residue. Na(+)-binding residues include Ser-161, Cys-164, and Thr-167.

This sequence belongs to the peptidase T1B family. HslV subfamily. A double ring-shaped homohexamer of HslV is capped on each side by a ring-shaped HslU homohexamer. The assembly of the HslU/HslV complex is dependent on binding of ATP.

It localises to the cytoplasm. The catalysed reaction is ATP-dependent cleavage of peptide bonds with broad specificity.. Allosterically activated by HslU binding. In terms of biological role, protease subunit of a proteasome-like degradation complex believed to be a general protein degrading machinery. The protein is ATP-dependent protease subunit HslV of Caldanaerobacter subterraneus subsp. tengcongensis (strain DSM 15242 / JCM 11007 / NBRC 100824 / MB4) (Thermoanaerobacter tengcongensis).